The sequence spans 90 residues: U7-theraphotoxin-Hhn1j (90 aa).

Residues 1-19 (MKTAIFTVVLALAVFAVLS) form the signal peptide. A propeptide spanning residues 20 to 50 (FGWEANEKALSEEFTELIHEKEAASETEARE) is cleaved from the precursor. 3 cysteine pairs are disulfide-bonded: Cys-51–Cys-65, Cys-58–Cys-70, and Cys-64–Cys-81.

Belongs to the neurotoxin 10 (Hwtx-1) family. 13 (Hntx-13) subfamily. As to expression, expressed by the venom gland.

It is found in the secreted. Ion channel inhibitor. The protein is U7-theraphotoxin-Hhn1j of Cyriopagopus hainanus (Chinese bird spider).